The primary structure comprises 521 residues: Lymphocyte activation gene 3 protein (521 aa).

The N-terminal stretch at 1 to 23 (MREDLLLGFLLLGLLWEAPVVSS) is a signal peptide. Topologically, residues 24–442 (GPGKELPVVW…ISGDLKGGHL (419 aa)) are extracellular. The region spanning 37-163 (GAPVHLPCSL…LSCSLRLRVG (127 aa)) is the Ig-like V-type domain. The interaction with FGL1 stretch occupies residues 37-246 (GAPVHLPCSL…LTYRDGFNVS (210 aa)). Cys44 and Cys156 are disulfide-bonded. Ig-like C2-type domains lie at 165–246 (ASMI…FNVS), 258–341 (PVAP…ATVT), and 345–412 (ITVT…EGQR). N-linked (GlcNAc...) asparagine glycosylation is present at Asn184. The cysteines at positions 185 and 235 are disulfide-linked. Residues Asn244, Asn309, Asn337, and Asn381 are each glycosylated (N-linked (GlcNAc...) asparagine). Cys276 and Cys327 form a disulfide bridge. Residues Cys363 and Cys405 are joined by a disulfide bond. The segment at 422–442 (ESSSGAHSARRISGDLKGGHL) is connecting peptide. Residues 443–463 (VLVLILGALSLFLLVAGAFGF) form a helical membrane-spanning segment. Residues 464-521 (HWWRKQLLLRRFSALEHGIQPFPAQRKIEELERELETEMGQEPEPEPEPQLEPEPRQL) are Cytoplasmic-facing. Positions 490–495 (KIEELE) match the KIEELE motif motif. Residues 493–518 (ELERELETEMGQEPEPEPEPQLEPEP) are 13 X 2 AA tandem repeats of E-X. Residues 493–521 (ELERELETEMGQEPEPEPEPQLEPEPRQL) are disordered. The span at 500–514 (TEMGQEPEPEPEPQL) shows a compositional bias: acidic residues.

It belongs to the LAG3 family. In terms of assembly, interacts with MHC class II (MHC-II); selectively recognizes stable complexes of peptide and MHC-II. Interacts with FGL1 (via the Fibrinogen C-terminal domain). In terms of processing, proteolytically cleaved by ADAM10 and ADAM17 within the connecting peptide region, leading to release of Secreted lymphocyte activation gene 3 protein (sLAG-3). ADAM10 mediates constitutive cleavage, but cleavage increases following T-cell activation, whereas shedding by ADAM17 is induced by TCR signaling in a PRKCQ-dependent manner. In terms of tissue distribution, primarily expressed in activated CD4(+) and CD8(+) T-cells. Also expressed in a subset of regulatory T-cells (Tregs), such as natural CD4(+)CD25(+) Tregs. Also expressed on plasmacytoid dendritic cells (pDCs).

It localises to the cell membrane. The protein resides in the secreted. Functionally, lymphocyte activation gene 3 protein: Inhibitory receptor on antigen activated T-cells. Delivers inhibitory signals upon binding to ligands, such as FGL1. FGL1 constitutes a major ligand of LAG3 and is responsible for LAG3 T-cell inhibitory function. Following TCR engagement, LAG3 associates with CD3-TCR in the immunological synapse and directly inhibits T-cell activation. May inhibit antigen-specific T-cell activation in synergy with PDCD1/PD-1, possibly by acting as a coreceptor for PDCD1/PD-1. Negatively regulates the proliferation, activation, effector function and homeostasis of both CD8(+) and CD4(+) T-cells. Also mediates immune tolerance: constitutively expressed on a subset of regulatory T-cells (Tregs) and contributes to their suppressive function. Also acts as a negative regulator of plasmacytoid dendritic cell (pDCs) activation. Binds MHC class II (MHC-II); the precise role of MHC-II-binding is however unclear. Its function is as follows. May function as a ligand for MHC class II (MHC-II) on antigen-presenting cells (APC), promoting APC activation/maturation and driving Th1 immune response. The sequence is that of Lymphocyte activation gene 3 protein from Mus musculus (Mouse).